The sequence spans 596 residues: Transcription factor EGL1 (596 aa).

Residues 401–450 (EETGNHALSEKKRREKLNERFMTLRSIIPSISKIDKVSILDDTIEYLQDL) enclose the bHLH domain.

In terms of assembly, efficient DNA binding requires dimerization with another bHLH protein. Homodimer and heterodimer with GL3. Interacts with CPC, MYB0/GL1, MYB5, MYB23, MYB113, MYB114, MYB75/PAP1, MYB90/PAP2, TT2, TRY, TTG1 and MYB66/WER. In terms of tissue distribution, ubiquitous with higher levels in buds and flowers. Specifically localized in developing root hair cells. Expressed in epidermal root hair cells (trichoblasts) and moves to root hairless cells (atrichoblasts) by a cell-to-cell movement through plasmodesmata (at protein level).

The protein resides in the nucleus. Its function is as follows. Transcription activator, when associated with MYB75/PAP1, MYB90/PAP2 or TT2. Involved in epidermal cell fate specification. Negatively regulates stomata formation but promotes trichome formation. Together with MYB66/WER, promotes the formation of non-hair cells in root epidermis cells in the N position. Whereas together with CPC, promotes the formation of hair cells in root epidermis cells in the H position by inhibiting non-hair cell formation. Also seems to play a role in the activation of anthocyanin biosynthesis, probably together with MYB75/PAP1. Involved in seed mucilage production. Activates the transcription of GL2. The chain is Transcription factor EGL1 (BHLH2) from Arabidopsis thaliana (Mouse-ear cress).